Reading from the N-terminus, the 328-residue chain is Fructose-1,6-bisphosphatase class 1 (328 aa).

Mg(2+) contacts are provided by Glu89, Asp110, Leu112, and Asp113. Substrate contacts are provided by residues Asn206, Tyr234, Tyr252 to Tyr254, and Lys264. Glu270 contributes to the Mg(2+) binding site.

It belongs to the FBPase class 1 family. Homotetramer. Mg(2+) is required as a cofactor.

The protein resides in the cytoplasm. The enzyme catalyses beta-D-fructose 1,6-bisphosphate + H2O = beta-D-fructose 6-phosphate + phosphate. Its pathway is carbohydrate biosynthesis; gluconeogenesis. In Wigglesworthia glossinidia brevipalpis, this protein is Fructose-1,6-bisphosphatase class 1.